Reading from the N-terminus, the 439-residue chain is DNA primase DnaG (439 aa).

The Toprim domain occupies 169–243 (DSIIVVEGRA…DIDYVARAPY (75 aa)). Residues glutamate 175, aspartate 217, and aspartate 219 each contribute to the Mg(2+) site.

It belongs to the archaeal DnaG primase family. Forms a ternary complex with MCM helicase and DNA. Mg(2+) serves as cofactor.

It carries out the reaction ssDNA + n NTP = ssDNA/pppN(pN)n-1 hybrid + (n-1) diphosphate.. Its function is as follows. RNA polymerase that catalyzes the synthesis of short RNA molecules used as primers for DNA polymerase during DNA replication. This Methanococcus maripaludis (strain C7 / ATCC BAA-1331) protein is DNA primase DnaG.